A 300-amino-acid polypeptide reads, in one-letter code: N-acetylmuramic acid 6-phosphate etherase (300 aa).

One can recognise an SIS domain in the interval 57-220 (IAVAFQSGGR…TTGAMIRTGK (164 aa)). The active-site Proton donor is Glu-85. Glu-116 is an active-site residue.

The protein belongs to the GCKR-like family. MurNAc-6-P etherase subfamily. Homodimer.

The catalysed reaction is N-acetyl-D-muramate 6-phosphate + H2O = N-acetyl-D-glucosamine 6-phosphate + (R)-lactate. The protein operates within amino-sugar metabolism; 1,6-anhydro-N-acetylmuramate degradation. It participates in amino-sugar metabolism; N-acetylmuramate degradation. It functions in the pathway cell wall biogenesis; peptidoglycan recycling. Specifically catalyzes the cleavage of the D-lactyl ether substituent of MurNAc 6-phosphate, producing GlcNAc 6-phosphate and D-lactate. Together with AnmK, is also required for the utilization of anhydro-N-acetylmuramic acid (anhMurNAc) either imported from the medium or derived from its own cell wall murein, and thus plays a role in cell wall recycling. This Aliivibrio fischeri (strain ATCC 700601 / ES114) (Vibrio fischeri) protein is N-acetylmuramic acid 6-phosphate etherase.